The chain runs to 2605 residues: Protein ABERRANT POLLEN TRANSMISSION 1 (2605 aa).

An N-terminal signal peptide occupies residues 1–43; that stretch reads MMLGLVQLLVGFVVAWEAVELVLRHGLLLSVFKLAILAALAAA. The disordered stretch occupies residues 137 to 158; that stretch reads STNKKKPAPRKPISTTTAKAKG. 11 N-linked (GlcNAc...) asparagine glycosylation sites follow: N232, N320, N348, N516, N587, N628, N696, N779, N1171, N1318, and N1459. Positions 305–326 are disordered; the sequence is SASTVAEQKDEPSVDNKSAARS. The span at 311-326 shows a compositional bias: basic and acidic residues; sequence EQKDEPSVDNKSAARS. Residues 1761–1818 are disordered; the sequence is MSKDGALSSVSSTSQPSEPQQIKSSESPPSNGSGKPDLTSSSENALKRSNNSDSEEEG. Residues 1768 to 1781 show a composition bias toward low complexity; that stretch reads SSVSSTSQPSEPQQ. Polar residues predominate over residues 1782–1812; sequence IKSSESPPSNGSGKPDLTSSSENALKRSNNS. Residues N1791, N1810, N2003, N2280, and N2291 are each glycosylated (N-linked (GlcNAc...) asparagine). Disordered regions lie at residues 2269–2312 and 2332–2361; these read VSTT…SSFD and EGQTNTQYEPQDAAKDSKLLRPVRSTREDK. Polar residues predominate over residues 2281–2300; the sequence is TSVAETNSPNNQSSKETTFA. Composition is skewed to basic and acidic residues over residues 2303–2312 and 2343–2361; these read PELRRTSSFD and DAAKDSKLLRPVRSTREDK. Residues N2468 and N2564 are each glycosylated (N-linked (GlcNAc...) asparagine). The segment at 2574–2605 is disordered; sequence TELEVAELPPRAPGYNTDSSSDSSSAETSPKD.

The protein belongs to the SABRE family. As to expression, mature pollen-specific.

The protein localises to the secreted. It is found in the golgi apparatus. Its function is as follows. May be involved in membrane trafficking. Required for tip growth in pollen tubes and root hairs. The protein is Protein ABERRANT POLLEN TRANSMISSION 1 of Zea mays (Maize).